The chain runs to 399 residues: MRLTQMPSEFQKALPVLEKIKEAGFEAYFVGGSVRDALLHSPIHDVDIATSSYPEETKQIFPRTADIGIEHGTVLVLDGDEEYEVTTFRTEDVYVDYRRPSAVSFVRSLEEDLKRRDFTVNAFALDETGEIVDLFHGLEDLEKQVLRAVGVASERFNEDALRIMRGFRFQASLGFALEPETFKAMKTLTPLLEKISVERTFVEFDKLLLAPFWRRGLASMIESQAYDYLPDMASSQDKLNRLFDLETDFTFESSEQAWAALLWALEIENAQSFLKSWKTSRQFAKQVQDLLIILALRENGELSKRDCYRFDIDLLLQAENLRQAQGKEVNPQAITEKYQSLTIHDKKDIQINGGILIKEYGYQPGPDLGEILTEIEFAIVDGELENNREAIHAYLREKK.

ATP is bound by residues glycine 32 and arginine 35. CTP is bound by residues glycine 32 and arginine 35. The Mg(2+) site is built by aspartate 45 and aspartate 47. ATP contacts are provided by arginine 116, aspartate 159, arginine 162, arginine 165, and arginine 168. Arginine 116, aspartate 159, arginine 162, arginine 165, and arginine 168 together coordinate CTP.

This sequence belongs to the tRNA nucleotidyltransferase/poly(A) polymerase family. Bacterial CCA-adding enzyme type 3 subfamily. In terms of assembly, homodimer. It depends on Mg(2+) as a cofactor.

It catalyses the reaction a tRNA precursor + 2 CTP + ATP = a tRNA with a 3' CCA end + 3 diphosphate. The enzyme catalyses a tRNA with a 3' CCA end + 2 CTP + ATP = a tRNA with a 3' CCACCA end + 3 diphosphate. Its function is as follows. Catalyzes the addition and repair of the essential 3'-terminal CCA sequence in tRNAs without using a nucleic acid template. Adds these three nucleotides in the order of C, C, and A to the tRNA nucleotide-73, using CTP and ATP as substrates and producing inorganic pyrophosphate. tRNA 3'-terminal CCA addition is required both for tRNA processing and repair. Also involved in tRNA surveillance by mediating tandem CCA addition to generate a CCACCA at the 3' terminus of unstable tRNAs. While stable tRNAs receive only 3'-terminal CCA, unstable tRNAs are marked with CCACCA and rapidly degraded. In Streptococcus pneumoniae (strain CGSP14), this protein is CCA-adding enzyme.